The sequence spans 207 residues: HTH-type transcriptional regulator AqdR (207 aa).

An HTH tetR-type domain is found at 16–76 (ARFRERVLDA…DALLTRTQAE (61 aa)). Positions 39–58 (GFADVARKAGVNGVSLYRRW) form a DNA-binding region, H-T-H motif.

In terms of biological role, may regulate the expression of genes involved in the degradation of the Pseudomonas aeruginosa quorum sensing signal molecules HHQ (2-heptyl-4-quinolone) and PQS (2-heptyl-3-hydroxy-4-quinolone). The sequence is that of HTH-type transcriptional regulator AqdR from Rhodococcus erythropolis (Arthrobacter picolinophilus).